Here is a 363-residue protein sequence, read N- to C-terminus: Phosphoserine aminotransferase (363 aa).

An L-glutamate-binding site is contributed by Arg42. Residues 76-77 (GR), Trp102, Thr156, Asp175, and Gln198 contribute to the pyridoxal 5'-phosphate site. Lys199 is subject to N6-(pyridoxal phosphate)lysine. A pyridoxal 5'-phosphate-binding site is contributed by 240–241 (NT).

This sequence belongs to the class-V pyridoxal-phosphate-dependent aminotransferase family. SerC subfamily. As to quaternary structure, homodimer. Pyridoxal 5'-phosphate is required as a cofactor.

Its subcellular location is the cytoplasm. The enzyme catalyses O-phospho-L-serine + 2-oxoglutarate = 3-phosphooxypyruvate + L-glutamate. The catalysed reaction is 4-(phosphooxy)-L-threonine + 2-oxoglutarate = (R)-3-hydroxy-2-oxo-4-phosphooxybutanoate + L-glutamate. Its pathway is amino-acid biosynthesis; L-serine biosynthesis; L-serine from 3-phospho-D-glycerate: step 2/3. The protein operates within cofactor biosynthesis; pyridoxine 5'-phosphate biosynthesis; pyridoxine 5'-phosphate from D-erythrose 4-phosphate: step 3/5. Its function is as follows. Catalyzes the reversible conversion of 3-phosphohydroxypyruvate to phosphoserine and of 3-hydroxy-2-oxo-4-phosphonooxybutanoate to phosphohydroxythreonine. The chain is Phosphoserine aminotransferase from Shewanella baltica (strain OS223).